A 337-amino-acid chain; its full sequence is Mannan polymerase complex subunit mnn9 (337 aa).

Residues 1–8 (MRVYNKSR) lie on the Cytoplasmic side of the membrane. The helical; Signal-anchor for type II membrane protein transmembrane segment at 9-29 (IVGQLLFVALGITFIYYLFTP) threads the bilayer. The Lumenal portion of the chain corresponds to 30–337 (SVNSNAKVQI…PYYLVFHHNE (308 aa)).

The protein belongs to the ANP1/MMN9/VAN1 family.

It is found in the endoplasmic reticulum membrane. The protein localises to the golgi apparatus membrane. It participates in protein modification; protein glycosylation. Functionally, required for the addition of the long alpha 1,6-mannose backbone of N-linked glycans on cell wall and periplasmic proteins. This chain is Mannan polymerase complex subunit mnn9, found in Schizosaccharomyces pombe (strain 972 / ATCC 24843) (Fission yeast).